Consider the following 392-residue polypeptide: S-adenosylmethionine synthase (392 aa).

H20 is a binding site for ATP. Residue D22 participates in Mg(2+) binding. E48 is a binding site for K(+). The L-methionine site is built by E61 and Q106. Residues 106–116 form a flexible loop region; the sequence is QSRDIINAIEK. Residues 171-173, D248, 254-255, A271, and K275 each bind ATP; these read DSK and RK. Residue D248 participates in L-methionine binding. K279 lines the L-methionine pocket.

The protein belongs to the AdoMet synthase family. As to quaternary structure, homotetramer; dimer of dimers. Requires Mg(2+) as cofactor. It depends on K(+) as a cofactor.

The protein resides in the cytoplasm. It carries out the reaction L-methionine + ATP + H2O = S-adenosyl-L-methionine + phosphate + diphosphate. It participates in amino-acid biosynthesis; S-adenosyl-L-methionine biosynthesis; S-adenosyl-L-methionine from L-methionine: step 1/1. Functionally, catalyzes the formation of S-adenosylmethionine (AdoMet) from methionine and ATP. The overall synthetic reaction is composed of two sequential steps, AdoMet formation and the subsequent tripolyphosphate hydrolysis which occurs prior to release of AdoMet from the enzyme. The polypeptide is S-adenosylmethionine synthase (Borreliella afzelii (strain PKo) (Borrelia afzelii)).